The chain runs to 139 residues: Ribonuclease P protein component (139 aa).

The interval 116–139 is disordered; that stretch reads FSKNKSTIGGEYSPKNEQCESELP.

This sequence belongs to the RnpA family. As to quaternary structure, consists of a catalytic RNA component (M1 or rnpB) and a protein subunit.

The enzyme catalyses Endonucleolytic cleavage of RNA, removing 5'-extranucleotides from tRNA precursor.. Its function is as follows. RNaseP catalyzes the removal of the 5'-leader sequence from pre-tRNA to produce the mature 5'-terminus. It can also cleave other RNA substrates such as 4.5S RNA. The protein component plays an auxiliary but essential role in vivo by binding to the 5'-leader sequence and broadening the substrate specificity of the ribozyme. This chain is Ribonuclease P protein component, found in Chlamydia abortus (strain DSM 27085 / S26/3) (Chlamydophila abortus).